Consider the following 434-residue polypeptide: Alpha-enolase (434 aa).

Ser-2 is subject to N-acetylserine. Lys-5 carries the post-translational modification N6-acetyllysine. Phosphoserine is present on Ser-27. Ser-40 provides a ligand contact to Mg(2+). Tyr-44 bears the Phosphotyrosine mark. An N6-acetyllysine; alternate modification is found at Lys-60. Lys-60 is modified (N6-succinyllysine; alternate). Lys-64 and Lys-71 each carry N6-acetyllysine. Lys-89 carries the post-translational modification N6-acetyllysine; alternate. Position 89 is an N6-succinyllysine; alternate (Lys-89). Residues Lys-92 and Lys-126 each carry the N6-acetyllysine modification. Positions 158 and 167 each coordinate substrate. Lys-193 and Lys-199 each carry N6-acetyllysine. At Lys-202 the chain carries N6-acetyllysine; alternate. Lys-202 is covalently cross-linked (Glycyl lysine isopeptide (Lys-Gly) (interchain with G-Cter in SUMO2); alternate). Glu-210 acts as the Proton donor in catalysis. An N6-acetyllysine; alternate mark is found at Lys-228 and Lys-233. At Lys-228 the chain carries N6-succinyllysine; alternate. Lys-228 is modified (N6-(2-hydroxyisobutyryl)lysine; alternate). Position 233 is an N6-malonyllysine; alternate (Lys-233). Asp-245 contacts Mg(2+). At Ser-254 the chain carries Phosphoserine. Lys-256 carries the N6-acetyllysine modification. Phosphoserine occurs at positions 263 and 272. N6-acetyllysine; alternate is present on Lys-281. Lys-281 carries the N6-(2-hydroxyisobutyryl)lysine; alternate modification. At Lys-285 the chain carries N6-acetyllysine. At Tyr-287 the chain carries Phosphotyrosine. Ser-291 is subject to Phosphoserine. The Mg(2+) site is built by Glu-293 and Asp-318. Residues Glu-293 and Asp-318 each coordinate substrate. Residues Lys-335 and Lys-343 each carry the N6-acetyllysine modification. Lys-343 serves as the catalytic Proton acceptor. Residues 370-373 (SHRS) and Lys-394 contribute to the substrate site. The required for interaction with PLG stretch occupies residues 405–434 (AKYNQLLRIEEELGSKAKFAGRNFRNPLAK). An N6-acetyllysine modification is found at Lys-406. Lys-420 carries the N6-acetyllysine; alternate modification. At Lys-420 the chain carries N6-succinyllysine; alternate. Lys-420 is subject to N6-malonyllysine; alternate.

It belongs to the enolase family. As to quaternary structure, mammalian enolase is composed of 3 isozyme subunits, alpha, beta and gamma, which can form homodimers or heterodimers which are cell-type and development-specific. ENO1 interacts with PLG in the neuronal plasma membrane and promotes its activation. The C-terminal lysine is required for this binding. Interacts with ENO4 and PGAM2. Interacts with CMTM6. It depends on Mg(2+) as a cofactor. Post-translationally, ISGylated. In terms of processing, lysine 2-hydroxyisobutyrylation (Khib) by p300/EP300 activates the phosphopyruvate hydratase activity.

The protein localises to the cytoplasm. It localises to the cell membrane. It carries out the reaction (2R)-2-phosphoglycerate = phosphoenolpyruvate + H2O. The protein operates within carbohydrate degradation; glycolysis; pyruvate from D-glyceraldehyde 3-phosphate: step 4/5. In terms of biological role, glycolytic enzyme the catalyzes the conversion of 2-phosphoglycerate to phosphoenolpyruvate. In addition to glycolysis, involved in various processes such as growth control, hypoxia tolerance and allergic responses. May also function in the intravascular and pericellular fibrinolytic system due to its ability to serve as a receptor and activator of plasminogen on the cell surface of several cell-types such as leukocytes and neurons. Stimulates immunoglobulin production. This is Alpha-enolase (ENO1) from Pongo abelii (Sumatran orangutan).